A 207-amino-acid chain; its full sequence is Urease accessory protein UreG (207 aa).

Residue 14 to 21 (GPVGSGKT) coordinates GTP.

The protein belongs to the SIMIBI class G3E GTPase family. UreG subfamily. In terms of assembly, homodimer. UreD, UreF and UreG form a complex that acts as a GTP-hydrolysis-dependent molecular chaperone, activating the urease apoprotein by helping to assemble the nickel containing metallocenter of UreC. The UreE protein probably delivers the nickel.

The protein localises to the cytoplasm. Functionally, facilitates the functional incorporation of the urease nickel metallocenter. This process requires GTP hydrolysis, probably effectuated by UreG. The chain is Urease accessory protein UreG from Tolumonas auensis (strain DSM 9187 / NBRC 110442 / TA 4).